Consider the following 331-residue polypeptide: MNLKNRHFLKLLDFTPEEITAYLDLAAELKAAKKAGREIQRMKGKNIALIFEKTSTRTRCAFEVAARDQGAGVTYLEPSASQIGHKESIKDTARVLGRMYDGIEYRGFAQETVEELTKYAGVPVFNGLTNEFHPTQMLADALTMREHSGKPLNQTAFAYVGDARYNMGNSLLILGAKLGMDVRIGAPQSLWPSEGIIAAAHAAAKETGAKITLTENAHEAVKNVDFIHTDVWVSMGEPKEVWQERIDLLKDYRVTPELMAASGNPQVKFMHCLPAFHNRETKVGEWIYETFGLNGVEVTEEVFESPASIVFDQAENRMHTIKAVMVAALGD.

Residues 55–58 (STRT), Gln82, Arg106, and 133–136 (HPTQ) contribute to the carbamoyl phosphate site. L-ornithine-binding positions include Asn166, Asp230, and 234-235 (SM). Carbamoyl phosphate is bound by residues 272 to 273 (CL) and Arg317.

It belongs to the aspartate/ornithine carbamoyltransferase superfamily. OTCase family.

It localises to the cytoplasm. The enzyme catalyses carbamoyl phosphate + L-ornithine = L-citrulline + phosphate + H(+). The protein operates within amino-acid biosynthesis; L-arginine biosynthesis; L-arginine from L-ornithine and carbamoyl phosphate: step 1/3. In terms of biological role, reversibly catalyzes the transfer of the carbamoyl group from carbamoyl phosphate (CP) to the N(epsilon) atom of ornithine (ORN) to produce L-citrulline. The protein is Ornithine carbamoyltransferase of Neisseria meningitidis serogroup C / serotype 2a (strain ATCC 700532 / DSM 15464 / FAM18).